Consider the following 37-residue polypeptide: Large ribosomal subunit protein bL36c (37 aa).

It belongs to the bacterial ribosomal protein bL36 family.

It is found in the plastid. The protein localises to the chloroplast. This Bigelowiella natans (Pedinomonas minutissima) protein is Large ribosomal subunit protein bL36c.